The primary structure comprises 345 residues: tRNA-specific 2-thiouridylase MnmA (345 aa).

Residues 6–13 and leucine 32 each bind ATP; that span reads AMSGGVDS. The active-site Nucleophile is cysteine 100. A disulfide bond links cysteine 100 and cysteine 197. Glycine 124 contributes to the ATP binding site. Residues 146–148 are interaction with tRNA; it reads RDQ. Catalysis depends on cysteine 197, which acts as the Cysteine persulfide intermediate.

It belongs to the MnmA/TRMU family.

It is found in the cytoplasm. The enzyme catalyses S-sulfanyl-L-cysteinyl-[protein] + uridine(34) in tRNA + AH2 + ATP = 2-thiouridine(34) in tRNA + L-cysteinyl-[protein] + A + AMP + diphosphate + H(+). Catalyzes the 2-thiolation of uridine at the wobble position (U34) of tRNA, leading to the formation of s(2)U34. This chain is tRNA-specific 2-thiouridylase MnmA, found in Acidiphilium cryptum (strain JF-5).